We begin with the raw amino-acid sequence, 642 residues long: Poly(A) polymerase beta (642 aa).

ATP-binding positions include 101 to 103 (FGS), T110, 114 to 116 (DID), D168, K229, Y238, and 247 to 248 (GV). The Mg(2+) site is built by D114, D116, and D168. 2 disordered regions span residues 530–553 (SENS…GNPQ) and 620–642 (LVNH…ILGV). The span at 620–636 (LVNHPSRPSGNTATNIP) shows a compositional bias: polar residues.

It belongs to the poly(A) polymerase family. As to quaternary structure, interacts with GSG1. Mg(2+) is required as a cofactor. Requires Mn(2+) as cofactor. Testis specific.

The protein localises to the cytoplasm. The protein resides in the nucleus. The catalysed reaction is RNA(n) + ATP = RNA(n)-3'-adenine ribonucleotide + diphosphate. The chain is Poly(A) polymerase beta from Mus musculus (Mouse).